The sequence spans 334 residues: Glycerol-3-phosphate dehydrogenase [NAD(P)+] (334 aa).

Trp-13, Arg-33, and Lys-106 together coordinate NADPH. Lys-106, Gly-137, and Ser-139 together coordinate sn-glycerol 3-phosphate. Ala-141 is a binding site for NADPH. The sn-glycerol 3-phosphate site is built by Lys-192, Asp-245, Ser-255, Arg-256, and Asn-257. The active-site Proton acceptor is the Lys-192. An NADPH-binding site is contributed by Arg-256. Residues Val-280 and Glu-282 each contribute to the NADPH site.

The protein belongs to the NAD-dependent glycerol-3-phosphate dehydrogenase family.

The protein resides in the cytoplasm. The catalysed reaction is sn-glycerol 3-phosphate + NAD(+) = dihydroxyacetone phosphate + NADH + H(+). It carries out the reaction sn-glycerol 3-phosphate + NADP(+) = dihydroxyacetone phosphate + NADPH + H(+). Its pathway is membrane lipid metabolism; glycerophospholipid metabolism. In terms of biological role, catalyzes the reduction of the glycolytic intermediate dihydroxyacetone phosphate (DHAP) to sn-glycerol 3-phosphate (G3P), the key precursor for phospholipid synthesis. In Chlamydia caviae (strain ATCC VR-813 / DSM 19441 / 03DC25 / GPIC) (Chlamydophila caviae), this protein is Glycerol-3-phosphate dehydrogenase [NAD(P)+].